Consider the following 127-residue polypeptide: UPF0102 protein Reut_A3265 (127 aa).

It belongs to the UPF0102 family.

The chain is UPF0102 protein Reut_A3265 from Cupriavidus pinatubonensis (strain JMP 134 / LMG 1197) (Cupriavidus necator (strain JMP 134)).